The sequence spans 265 residues: Hydroxyethylthiazole kinase (265 aa).

M41 serves as a coordination point for substrate. Positions 117 and 163 each coordinate ATP. Residue G190 participates in substrate binding.

It belongs to the Thz kinase family. Requires Mg(2+) as cofactor.

The catalysed reaction is 5-(2-hydroxyethyl)-4-methylthiazole + ATP = 4-methyl-5-(2-phosphooxyethyl)-thiazole + ADP + H(+). It participates in cofactor biosynthesis; thiamine diphosphate biosynthesis; 4-methyl-5-(2-phosphoethyl)-thiazole from 5-(2-hydroxyethyl)-4-methylthiazole: step 1/1. Functionally, catalyzes the phosphorylation of the hydroxyl group of 4-methyl-5-beta-hydroxyethylthiazole (THZ). This Pediococcus pentosaceus (strain ATCC 25745 / CCUG 21536 / LMG 10740 / 183-1w) protein is Hydroxyethylthiazole kinase.